A 293-amino-acid chain; its full sequence is MTDSPTAGTPYGTLPPASPLPQRRPVSLPRLAQMREAGEKITMLTAYDATFAAVADAAGVECILVGDSLGMVCQGLPSTVGVTLEHMAYHTASVARGLHRVQGTAWLIADLPYGSYAESREQALRSACQLMQAGAHMVKLEGGGWTAPTVQFLVERGVPVCAHLGLTPQTVHALGGYRVQGKGDQAAQQLRRQALELQDAGAAMLVLEMVPTPLARDLTQALPRCHTIGIGAGSGTAGQVLVMHDMLGINLGKNPKFVHDFMRDAGSVRGAIEAYVQAVKQGRFPDDALHAWN.

The disordered stretch occupies residues 1–25 (MTDSPTAGTPYGTLPPASPLPQRRP). Mg(2+) contacts are provided by D67 and D110. 3-methyl-2-oxobutanoate contacts are provided by residues 67 to 68 (DS), D110, and K139. E141 serves as a coordination point for Mg(2+). The Proton acceptor role is filled by E208.

The protein belongs to the PanB family. Homodecamer; pentamer of dimers. The cofactor is Mg(2+).

It localises to the cytoplasm. It carries out the reaction 3-methyl-2-oxobutanoate + (6R)-5,10-methylene-5,6,7,8-tetrahydrofolate + H2O = 2-dehydropantoate + (6S)-5,6,7,8-tetrahydrofolate. It participates in cofactor biosynthesis; (R)-pantothenate biosynthesis; (R)-pantoate from 3-methyl-2-oxobutanoate: step 1/2. In terms of biological role, catalyzes the reversible reaction in which hydroxymethyl group from 5,10-methylenetetrahydrofolate is transferred onto alpha-ketoisovalerate to form ketopantoate. The polypeptide is 3-methyl-2-oxobutanoate hydroxymethyltransferase (Acidovorax sp. (strain JS42)).